A 318-amino-acid chain; its full sequence is MANEMEFEKPILELKSKIADLKEYNETSDVDLTNEIEKLEKRLGKLESSIYSNMTAWDKFQVARHPERPTTLDYISLLFEDFMELHGDRAFGDDAAIVGGIATFKGVPVTVIGHQRGKDTKDNLHRNFGMPHPEGFRKALRLMKQADKFGRPIICFIDTKGAYPGRAAEERGQSEAIARNLYEMSDMKVPIISIVIGEGGSGGALALGVGNQIFMLENAVFSVISPEGAAAILWKDASQAKKAAESMRITAGDLFELGITDGIIPEVKGGAHRDLNAQAEEINKTITKSLHALMAFSEEQLIEQRYEKFKKIGVYDTL.

A CoA carboxyltransferase C-terminal domain is found at 31 to 292 (DLTNEIEKLE…NKTITKSLHA (262 aa)).

It belongs to the AccA family. As to quaternary structure, acetyl-CoA carboxylase is a heterohexamer composed of biotin carboxyl carrier protein (AccB), biotin carboxylase (AccC) and two subunits each of ACCase subunit alpha (AccA) and ACCase subunit beta (AccD).

Its subcellular location is the cytoplasm. It carries out the reaction N(6)-carboxybiotinyl-L-lysyl-[protein] + acetyl-CoA = N(6)-biotinyl-L-lysyl-[protein] + malonyl-CoA. Its pathway is lipid metabolism; malonyl-CoA biosynthesis; malonyl-CoA from acetyl-CoA: step 1/1. Its function is as follows. Component of the acetyl coenzyme A carboxylase (ACC) complex. First, biotin carboxylase catalyzes the carboxylation of biotin on its carrier protein (BCCP) and then the CO(2) group is transferred by the carboxyltransferase to acetyl-CoA to form malonyl-CoA. This is Acetyl-coenzyme A carboxylase carboxyl transferase subunit alpha from Listeria monocytogenes serotype 4a (strain HCC23).